Consider the following 358-residue polypeptide: Leukotriene B4 receptor 2 (358 aa).

The Extracellular portion of the chain corresponds to 1-24; that stretch reads MSVCYRPPGNETLLSWKTSRATGT. A glycan (N-linked (GlcNAc...) asparagine) is linked at asparagine 10. A helical membrane pass occupies residues 25 to 45; the sequence is AFLLLAALLGLPGNGFVVWSL. At 46–60 the chain is on the cytoplasmic side; it reads AGWRPARGRPLAATL. A helical membrane pass occupies residues 61 to 81; that stretch reads VLHLALADGAVLLLTPLFVAF. At 82–96 the chain is on the extracellular side; sequence LTRQAWPLGQAGCKA. The helical transmembrane segment at 97–117 threads the bilayer; sequence VYYVCALSMYASVLLTGLLSL. Residues 118 to 140 lie on the Cytoplasmic side of the membrane; it reads QRCLAVTRPFLAPRLRSPALARR. Residues 141–161 form a helical membrane-spanning segment; that stretch reads LLLAVWLAALLLAVPAAVYRH. Residues 162 to 185 are Extracellular-facing; that stretch reads LWRDRVCQLCHPSPVHAAAHLSLE. Residues 186–206 form a helical membrane-spanning segment; the sequence is TLTAFVLPFGLMLGCYSVTLA. Over 207-224 the chain is Cytoplasmic; the sequence is RLRGARWGSGRHGARVGR. The helical transmembrane segment at 225-245 threads the bilayer; it reads LVSAIVLAFGLLWAPYHAVNL. At 246-275 the chain is on the extracellular side; sequence LQAVAALAPPEGALAKLGGAGQAARAGTTA. The helical transmembrane segment at 276-296 threads the bilayer; that stretch reads LAFFSSSVNPVLYVFTAGDLL. Topologically, residues 297 to 358 are cytoplasmic; that stretch reads PRAGPRFLTR…MEKDGPEWDL (62 aa). The tract at residues 311–358 is disordered; the sequence is SGEARGGGRSREGTMELRTTPQLKVVGQGRGNGDPGGGMEKDGPEWDL. Residues 338-348 show a composition bias toward gly residues; the sequence is QGRGNGDPGGG. The span at 349–358 shows a compositional bias: basic and acidic residues; the sequence is MEKDGPEWDL.

This sequence belongs to the G-protein coupled receptor 1 family. Widely expressed.

The protein localises to the cell membrane. Functionally, low-affinity receptor for leukotrienes including leukotriene B4. Mediates chemotaxis of granulocytes and macrophages. The response is mediated via G-proteins that activate a phosphatidylinositol-calcium second messenger system. The rank order of affinities for the leukotrienes is LTB4 &gt; 12-epi-LTB4 &gt; LTB5 &gt; LTB3. The protein is Leukotriene B4 receptor 2 (LTB4R2) of Homo sapiens (Human).